Here is a 583-residue protein sequence, read N- to C-terminus: Probable GTP diphosphokinase CRSH, chloroplastic (583 aa).

The N-terminal 58 residues, 1 to 58 (MSVIRPSPIPIPRCRSQVLHRRLYSIQLIQRRRRRWNPRSEVEDTAIESTARSPEAAG), are a transit peptide targeting the chloroplast. One can recognise an HD domain in the interval 112–212 (PLSKALSLSI…MDLVSKLDEM (101 aa)). EF-hand domains lie at 470-505 (TTTNQRDRVFCLLDKNGDGMISIEELMEVMEELGAP) and 507-539 (EDAEEMMQLLDSNSDGSLSSDEFDTFQKQVEFM). The Ca(2+) site is built by Asp-483, Asn-485, Asp-487, Met-489, Glu-494, Asp-517, Asn-519, Asp-521, Ser-523, and Glu-528.

This sequence belongs to the RelA/SpoT family. In terms of tissue distribution, expressed in shoots, cotyledons, rosette and cauline leaves, stems, sepals, pistils and siliques.

The protein localises to the plastid. Its subcellular location is the chloroplast. It catalyses the reaction GTP + ATP = guanosine 3'-diphosphate 5'-triphosphate + AMP. With respect to regulation, activated by calcium. Its function is as follows. Possesses calcium-dependent ppGpp (guanosine 3'-diphosphate 5'-diphosphate) synthetase activity in vitro and is able to functionally complement E.coli relA mutants. Plays an important role in the timing adjustment of pistil and pollen maturation required for successful pollination. May be involved in a rapid plant ppGpp-mediated response to pathogens and other stresses. The chain is Probable GTP diphosphokinase CRSH, chloroplastic (CRSH) from Arabidopsis thaliana (Mouse-ear cress).